The following is a 966-amino-acid chain: Phosphoenolpyruvate carboxylase (966 aa).

A Phosphoserine modification is found at serine 10. Catalysis depends on residues histidine 171 and lysine 601.

It belongs to the PEPCase type 1 family. As to quaternary structure, homotetramer. Mg(2+) is required as a cofactor.

The protein resides in the cytoplasm. It catalyses the reaction oxaloacetate + phosphate = phosphoenolpyruvate + hydrogencarbonate. With respect to regulation, by light-reversible phosphorylation. Its function is as follows. Through the carboxylation of phosphoenolpyruvate (PEP) it forms oxaloacetate, a four-carbon dicarboxylic acid source for the tricarboxylic acid cycle. The polypeptide is Phosphoenolpyruvate carboxylase (PEPC) (Medicago sativa (Alfalfa)).